Here is a 312-residue protein sequence, read N- to C-terminus: Acetyl-coenzyme A carboxylase carboxyl transferase subunit beta (312 aa).

The tract at residues 1-52 (MEMDTAVENPAVEKNGQPTPSSTSTATDAAPTPNAPNRPAPNTAGNRKRGVP) is disordered. Positions 18–32 (PTPSSTSTATDAAPT) are enriched in low complexity. The region spanning 55–312 (VWRKCDSCGA…IATAIDYCGK (258 aa)) is the CoA carboxyltransferase N-terminal domain. Zn(2+) is bound by residues cysteine 59, cysteine 62, cysteine 78, and cysteine 81. Residues 59-81 (CDSCGASLFYKEVQQRLNVCPQC) form a C4-type zinc finger.

Belongs to the AccD/PCCB family. In terms of assembly, acetyl-CoA carboxylase is a heterohexamer composed of biotin carboxyl carrier protein (AccB), biotin carboxylase (AccC) and two subunits each of ACCase subunit alpha (AccA) and ACCase subunit beta (AccD). It depends on Zn(2+) as a cofactor.

It localises to the cytoplasm. The catalysed reaction is N(6)-carboxybiotinyl-L-lysyl-[protein] + acetyl-CoA = N(6)-biotinyl-L-lysyl-[protein] + malonyl-CoA. It participates in lipid metabolism; malonyl-CoA biosynthesis; malonyl-CoA from acetyl-CoA: step 1/1. Component of the acetyl coenzyme A carboxylase (ACC) complex. Biotin carboxylase (BC) catalyzes the carboxylation of biotin on its carrier protein (BCCP) and then the CO(2) group is transferred by the transcarboxylase to acetyl-CoA to form malonyl-CoA. In Rhodopirellula baltica (strain DSM 10527 / NCIMB 13988 / SH1), this protein is Acetyl-coenzyme A carboxylase carboxyl transferase subunit beta.